The primary structure comprises 213 residues: Ribonuclease HII (213 aa).

The RNase H type-2 domain occupies 25–213; that stretch reads KTLCGVDEAG…FKPVKQLLPH (189 aa). Positions 31, 32, and 124 each coordinate a divalent metal cation.

Belongs to the RNase HII family. Mn(2+) is required as a cofactor. It depends on Mg(2+) as a cofactor.

The protein localises to the cytoplasm. It catalyses the reaction Endonucleolytic cleavage to 5'-phosphomonoester.. Functionally, endonuclease that specifically degrades the RNA of RNA-DNA hybrids. The chain is Ribonuclease HII from Magnetococcus marinus (strain ATCC BAA-1437 / JCM 17883 / MC-1).